Consider the following 638-residue polypeptide: LEAF RUST 10 DISEASE-RESISTANCE LOCUS RECEPTOR-LIKE PROTEIN KINASE-like 2.1 (638 aa).

The N-terminal stretch at 1-29 (MINLSLYQTNSLSYTIIWMLFVIPSCVLS) is a signal peptide. Residues 30-264 (VDERQKHCSP…EHTCGKMGIG (235 aa)) lie on the Extracellular side of the membrane. N-linked (GlcNAc...) asparagine glycosylation is found at asparagine 69, asparagine 114, asparagine 136, asparagine 204, and asparagine 239. The helical transmembrane segment at 265–285 (IGLGCGFLGATLITVCLLCFF) threads the bilayer. At 286–638 (FQKRRTSHHL…YTEVFIGSTS (353 aa)) the chain is on the cytoplasmic side. The 289-residue stretch at 321-609 (KLFSHTLGKG…VLEVPPKPSI (289 aa)) folds into the Protein kinase domain. Residues 327–335 (LGKGGFGTV) and lysine 349 contribute to the ATP site. The residue at position 393 (tyrosine 393) is a Phosphotyrosine. Aspartate 444 (proton acceptor) is an active-site residue. The residue at position 484 (threonine 484) is a Phosphothreonine.

This sequence belongs to the protein kinase superfamily. Ser/Thr protein kinase family.

It is found in the membrane. It carries out the reaction L-seryl-[protein] + ATP = O-phospho-L-seryl-[protein] + ADP + H(+). It catalyses the reaction L-threonyl-[protein] + ATP = O-phospho-L-threonyl-[protein] + ADP + H(+). The protein is LEAF RUST 10 DISEASE-RESISTANCE LOCUS RECEPTOR-LIKE PROTEIN KINASE-like 2.1 of Arabidopsis thaliana (Mouse-ear cress).